The sequence spans 305 residues: MSDMNKILQKWGASLRKGTDFDSWGQLVEAIDEYQILARQLQKEAQSPANSSDFTEDQKKTIGKIATCLELRSAALQYTQSQEGFTLEDVKKLEPILSSILTFNKEFPFDVQPVPLRRILAPGEEENLEVEEEEEDGGAGAGSPDLFPARVPGTLLPRLPSEPGMTLLTIKIEKIGLKDAGQCIDPYITVSVKDLNGIDLTPVQDTPMAVRKEDTYVHFNVEIEIQKHVEKLTKGAAIFFEFKHYKPKKRFTSTKCFAFMEMDEIRSGQIVIELYKKPTDFKRKRLQLLTKKPLYLHLLQTLLKD.

Residues 126-137 (ENLEVEEEEEDG) are compositionally biased toward acidic residues. The tract at residues 126–146 (ENLEVEEEEEDGGAGAGSPDL) is disordered. The axin-binding stretch occupies residues 153-220 (GTLLPRLPSE…RKEDTYVHFN (68 aa)). One can recognise a C2 Aida-type domain in the interval 156-303 (LPRLPSEPGM…LYLHLLQTLL (148 aa)).

The protein belongs to the AIDA family.

Functionally, acts as a ventralizing factor during embryogenesis. Inhibits axin-mediated JNK activation by binding axin and disrupting axin homodimerization. This in turn antagonizes a Wnt/beta-catenin-independent dorsalization pathway activated by axin/JNK-signaling. In Xenopus laevis (African clawed frog), this protein is Axin interactor, dorsalization-associated protein B (aida-b).